A 304-amino-acid polypeptide reads, in one-letter code: Histone H1.8 (304 aa).

A compositionally biased stretch (low complexity) spans M1–S24. 3 disordered regions span residues M1–R38, S110–A248, and T270–A304. An H15 domain is found at R45–P123. Over residues A132 to E144 the composition is skewed to low complexity. Composition is skewed to basic and acidic residues over residues L153 to G166, K189 to K202, and A225 to K237. A Nuclear localization signal motif is present at residues K154–R170. Residues T270–Q281 show a composition bias toward polar residues.

This sequence belongs to the histone H1/H5 family. In terms of tissue distribution, oocyte-specific.

It is found in the cytoplasm. The protein localises to the nucleus. Its subcellular location is the chromosome. Its function is as follows. May play a key role in the control of gene expression during oogenesis and early embryogenesis, presumably through the perturbation of chromatin structure. Essential for meiotic maturation of germinal vesicle-stage oocytes. The somatic type linker histone H1c is rapidly replaced by H1oo in a donor nucleus transplanted into an oocyte. The greater mobility of H1oo as compared to H1c may contribute to this rapid replacement and increased instability of the embryonic chromatin structure. The rapid replacement of H1c with H1oo may play an important role in nuclear remodeling. This is Histone H1.8 from Mus musculus (Mouse).